The primary structure comprises 270 residues: Cell surface glycoprotein CD200 receptor 4 (270 aa).

Residues 1–25 (MHALGRIPTLTLLIFINIFVSGSSC) form the signal peptide. The Ig-like V-type domain occupies 26–145 (TDENQTIQND…GNLEKVYDLQ (120 aa)). Over 26 to 241 (TDENQTIQND…TMTTPRSLLT (216 aa)) the chain is Extracellular. N29 and N44 each carry an N-linked (GlcNAc...) asparagine glycan. Intrachain disulfides connect C58–C129, C82–C97, C164–C213, and C183–C201. Positions 134–229 (PEGNLEKVYD…GNQSLSIELS (96 aa)) constitute an Ig-like C2-type domain. The N-linked (GlcNAc...) asparagine glycan is linked to N192. The chain crosses the membrane as a helical span at residues 242-262 (ILYVKMALLVIILLNVGFAFF). The Cytoplasmic segment spans residues 263–270 (QKRNFART).

This sequence belongs to the CD200R family. In terms of assembly, interacts with TYROBP. As to expression, highly expressed in monocytes, NK cells and a subset of NKT cells. Weakly expressed in granulocytes and B-cells (at protein level). Expressed in brain, lung, testis, thymus, intestine and uterus. Expressed in bone marrow derived-macrophage and dendritic cells and mast cells.

The protein localises to the membrane. Its function is as follows. Involved in the recruitment or surface expression of the TYROBP receptor. The sequence is that of Cell surface glycoprotein CD200 receptor 4 (Cd200r4) from Mus musculus (Mouse).